We begin with the raw amino-acid sequence, 1463 residues long: DNA polymerase III PolC-type (1463 aa).

The Exonuclease domain maps to 425-581 (YVVFDVETTG…YDAEATGRLL (157 aa)).

Belongs to the DNA polymerase type-C family. PolC subfamily.

The protein localises to the cytoplasm. It carries out the reaction DNA(n) + a 2'-deoxyribonucleoside 5'-triphosphate = DNA(n+1) + diphosphate. In terms of biological role, required for replicative DNA synthesis. This DNA polymerase also exhibits 3' to 5' exonuclease activity. The polypeptide is DNA polymerase III PolC-type (Streptococcus pneumoniae serotype 2 (strain D39 / NCTC 7466)).